The sequence spans 432 residues: Cytochrome c biogenesis protein CcsB (432 aa).

3 helical membrane passes run 18–38, 76–96, and 166–186; these read LRLA…GTGI, SGWF…CSWR, and VGPL…AWGA.

The protein belongs to the Ccs1/CcsB family. In terms of assembly, may interact with CcsA.

It is found in the cellular thylakoid membrane. Required during biogenesis of c-type cytochromes (cytochrome c6 and cytochrome f) at the step of heme attachment. This chain is Cytochrome c biogenesis protein CcsB, found in Synechococcus sp. (strain CC9605).